We begin with the raw amino-acid sequence, 134 residues long: Small ribosomal subunit protein uS11 (134 aa).

Polar residues predominate over residues 113 to 122; it reads SSITDATPQP. The segment at 113–134 is disordered; the sequence is SSITDATPQPHNGCRPTKRRKV.

This sequence belongs to the universal ribosomal protein uS11 family. In terms of assembly, part of the 30S ribosomal subunit. Interacts with proteins S7 and S18. Binds to IF-3.

Located on the platform of the 30S subunit, it bridges several disparate RNA helices of the 16S rRNA. Forms part of the Shine-Dalgarno cleft in the 70S ribosome. In Corynebacterium aurimucosum (strain ATCC 700975 / DSM 44827 / CIP 107346 / CN-1) (Corynebacterium nigricans), this protein is Small ribosomal subunit protein uS11.